The sequence spans 123 residues: uncharacterized protein (123 aa).

Residues Gly-5 to Tyr-25 traverse the membrane as a helical segment. A disordered region spans residues Lys-32–Asp-53. Positions Val-35 to Pro-47 are enriched in pro residues.

It belongs to the asfivirus CP123L family.

The protein resides in the host membrane. The protein localises to the virion. This is an uncharacterized protein from Ornithodoros (relapsing fever ticks).